The primary structure comprises 845 residues: IVELQFEKEKVSLKLEEEIQENKDLIKENNATRHLCNLLKETSARSAEKTNKYEYEREETRQVYVDLNNNIEKMILAFEELRVQAENARLDMHFKLKEDHEKIQHLQEEYKKEVNDKENQVSLLLIQRTEKENKMKDLTFLLEESRDKVNQLEDKTKLQDENVKELNKKKDHLTSELEDTKMSLQRSMNTQKALEEDLQIATKTIYQLTEEKEAQMEEFNKAKTDHSFMVTELKATTCTLEELLRTEQQRLVKNEDQLKILTMELQKKSNELDEMTKFKNNNEVKLEELKKILAEDQKLLDEKKQVEKLAEELQGKEQELTLLLQTREKEVHDLEEQLLVTKISDQNYSKQVEELKTKLEEEKLKNAELTASCGKLSLENNKLTQETNDMALELKKYQEDITNSKKQEERMLKQIENLEEKETHLRDELESVRKEFIQQGNEVKCKLDKSEENARSIECEVLKKEKQMKILENKCNNLRKQAENKSKYIEELHQENKALKKKSSAESKQLNAYEIKVNKLQLELESAKQKFQEMTDNYQKEIEVKKISEEKLLGEVEKAKAMVDEAVKLQKEIDLRCQHKIAEMVALMEKHKHQYDKIVEERDSELGLCKNREQEQLSVKTALETELSNIRNELVSLKKQLEIEREEKEKLKLEKENTAILKDKKDKKIQTSLLESAETTCQKFDSKTTPSQNISRISSSMESGKTKDNRDCLRTSAKILSTAFVKEYTVKTPTKMQMYQRENKYIPTGRSNKKRKTVFEFDVNSDSSETTDLLSMVSEEEISNRLYNNNSPNSHLTPKQTPLSLSTPESFVSLGGVRKMREDRWATIAKTDRKRRLKEAEKLFA.

The tract at residues 59-215 is interaction with SYCE3; it reads ETRQVYVDLN…YQLTEEKEAQ (157 aa). Coiled coils occupy residues 64-211 and 244-544; these read YVDL…LTEE and LRTE…EIEV. The required for pH-induced assembly of C-terminal ends into antiparallel tetramers stretch occupies residues 550-644; that stretch reads EKLLGEVEKA…VSLKKQLEIE (95 aa). The Nuclear localization signal signature appears at 553-556; it reads LGEV. The stretch at 620–663 forms a coiled coil; the sequence is KTALETELSNIRNELVSLKKQLEIEREEKEKLKLEKENTAILKD. The tract at residues 657–845 is DNA-binding; sequence NTAILKDKKD…RLKEAEKLFA (189 aa). The residue at position 676 (S676) is a Phosphoserine. Residues 684 to 703 are compositionally biased toward polar residues; that stretch reads FDSKTTPSQNISRISSSMES. Residues 684-709 are disordered; the sequence is FDSKTTPSQNISRISSSMESGKTKDN. Residues 753-756 carry the Nuclear localization signal motif; the sequence is KKRK. Residues 786-808 form a disordered region; it reads LYNNNSPNSHLTPKQTPLSLSTP.

In terms of assembly, structural component of synaptonemal complexes. Homotetramer that consists of an N-terminal four-helical bundle that bifurcates into two elongated C-terminal dimeric coiled coils. This tetrameric building block potentially self-assembles into a supramolecular zipper-like lattice to mediate meiotic chromosome synapsis. Self-assembly is likely initiated by local proton density at chromosome axis, which is predicted to trigger antiparallel back to back assembly of adjacent C-terminal ends into tetrameric structures that anchor to chromosomal DNA. Then the N-terminal ends are predicted to undergo cooperative antiparallel head to head assembly at the midline of synaptonemal complexes central element to form a zipper-like lattice between properly aligned homologous chromosomes. The nascent synapsis generated by SYCP1 is stabilized through interaction with central element proteins SYCE1 and SYCE2. Interacts (via tetrameric core) with SYCE3; the interaction remodels SYCP1 homotetramers to 2:1 heterotrimers with SYCE3. SYCP1/SYCE3 heterotrimers form lattice assemblies as part of the mature synaptonemal complex via both lateral and head-to-head interactions. Forms a complex with EWSR1, PRDM9, SYCP3 and REC8; complex formation is dependent of phosphorylated form of REC8 and requires PRDM9 bound to hotspot DNA; EWSR1 joins PRDM9 with the chromosomal axis through REC8. Interacts with SPO16.

The protein resides in the nucleus. It localises to the chromosome. The protein localises to the centromere. Its function is as follows. Major component of the transverse filaments of synaptonemal complexes, formed between homologous chromosomes during meiotic prophase. Required for normal assembly of the central element of the synaptonemal complexes. Required for normal centromere pairing during meiosis. Required for normal meiotic chromosome synapsis during oocyte and spermatocyte development and for normal male and female fertility. The protein is Synaptonemal complex protein 1 of Mesocricetus auratus (Golden hamster).